The chain runs to 847 residues: Leucine--tRNA ligase (847 aa).

The 'HIGH' region motif lies at 41–51 (PYPSGRIHMGH). A 'KMSKS' region motif is present at residues 619–623 (KMSKS). An ATP-binding site is contributed by Lys-622.

Belongs to the class-I aminoacyl-tRNA synthetase family.

Its subcellular location is the cytoplasm. It catalyses the reaction tRNA(Leu) + L-leucine + ATP = L-leucyl-tRNA(Leu) + AMP + diphosphate. The sequence is that of Leucine--tRNA ligase from Cereibacter sphaeroides (strain ATCC 17029 / ATH 2.4.9) (Rhodobacter sphaeroides).